Consider the following 230-residue polypeptide: Uracil-DNA glycosylase (230 aa).

The active-site Proton acceptor is the D70.

This sequence belongs to the uracil-DNA glycosylase (UDG) superfamily. UNG family.

It is found in the cytoplasm. The enzyme catalyses Hydrolyzes single-stranded DNA or mismatched double-stranded DNA and polynucleotides, releasing free uracil.. Functionally, excises uracil residues from the DNA which can arise as a result of misincorporation of dUMP residues by DNA polymerase or due to deamination of cytosine. The sequence is that of Uracil-DNA glycosylase from Pseudomonas entomophila (strain L48).